The sequence spans 432 residues: Benzoyl-CoA reductase subunit B (432 aa).

The protein belongs to the FldB/FldC dehydratase alpha/beta subunit family. Heterotetramer composed of A, B, C, and D subunits. Iron-sulfur cluster serves as cofactor. It depends on an oxidized flavin as a cofactor.

It catalyses the reaction cyclohexa-1,5-diene-1-carbonyl-CoA + oxidized 2[4Fe-4S]-[ferredoxin] + 2 ADP + 2 phosphate = reduced 2[4Fe-4S]-[ferredoxin] + benzoyl-CoA + 2 ATP + 2 H2O. The catalysed reaction is 3-hydroxybenzoyl-CoA + AH2 + 2 ATP + 2 H2O = 3-hydroxycyclohexa-1,5-diene-1-carbonyl-CoA + A + 2 ADP + 2 phosphate + 2 H(+). In terms of biological role, catalyzes the anaerobic reduction of benzoyl-CoA and 3-hydroxybenzoyl-CoA to form cyclohexa-1,5-diene-1-carbonyl-CoA and 3-hydroxycyclohexa-1,5-diene-1-carbonyl-CoA, respectively. The enzyme also reduces other benzoyl-CoA analogs with small substituents at the aromatic ring. The chain is Benzoyl-CoA reductase subunit B (bcrB) from Thauera aromatica.